Reading from the N-terminus, the 103-residue chain is Large ribosomal subunit protein bL21 (103 aa).

Belongs to the bacterial ribosomal protein bL21 family. As to quaternary structure, part of the 50S ribosomal subunit. Contacts protein L20.

This protein binds to 23S rRNA in the presence of protein L20. The polypeptide is Large ribosomal subunit protein bL21 (Histophilus somni (strain 129Pt) (Haemophilus somnus)).